The following is an 83-amino-acid chain: Small ribosomal subunit protein bS16 (83 aa).

It belongs to the bacterial ribosomal protein bS16 family.

The chain is Small ribosomal subunit protein bS16 from Acidovorax ebreus (strain TPSY) (Diaphorobacter sp. (strain TPSY)).